The chain runs to 440 residues: Xylose isomerase (440 aa).

Active-site residues include His-101 and Asp-104. Mg(2+) contacts are provided by Glu-232, Glu-268, His-271, Asp-296, Asp-307, Asp-309, and Asp-339.

The protein belongs to the xylose isomerase family. Homotetramer. The cofactor is Mg(2+).

It localises to the cytoplasm. It carries out the reaction alpha-D-xylose = alpha-D-xylulofuranose. This is Xylose isomerase from Salmonella paratyphi B (strain ATCC BAA-1250 / SPB7).